The primary structure comprises 390 residues: Chorismate synthase (390 aa).

NADP(+)-binding residues include Arg-48 and Arg-54. FMN-binding positions include 132-134, 244-245, Gly-289, 304-308, and Arg-330; these read RSS, NA, and KPTSS. The disordered stretch occupies residues 362 to 390; sequence VGAHPAGAHPAGADPAGTHPGGPGGFQPG. The span at 363 to 379 shows a compositional bias: low complexity; it reads GAHPAGAHPAGADPAGT. Over residues 380–390 the composition is skewed to gly residues; the sequence is HPGGPGGFQPG.

Belongs to the chorismate synthase family. As to quaternary structure, homotetramer. It depends on FMNH2 as a cofactor.

It catalyses the reaction 5-O-(1-carboxyvinyl)-3-phosphoshikimate = chorismate + phosphate. Its pathway is metabolic intermediate biosynthesis; chorismate biosynthesis; chorismate from D-erythrose 4-phosphate and phosphoenolpyruvate: step 7/7. In terms of biological role, catalyzes the anti-1,4-elimination of the C-3 phosphate and the C-6 proR hydrogen from 5-enolpyruvylshikimate-3-phosphate (EPSP) to yield chorismate, which is the branch point compound that serves as the starting substrate for the three terminal pathways of aromatic amino acid biosynthesis. This reaction introduces a second double bond into the aromatic ring system. The protein is Chorismate synthase of Methylobacterium sp. (strain 4-46).